Reading from the N-terminus, the 410-residue chain is Serine/threonine transporter SstT (410 aa).

A run of 10 helical transmembrane segments spans residues 15-35 (GSLV…AWLS), 49-69 (FVNA…ISSI), 82-102 (PIVM…VVAS), 118-138 (IVPP…MVTN), 142-162 (AVMK…GFAF), 190-210 (FAPV…GFDA), 217-237 (LLGL…PLLV), 299-319 (MAGA…TLGI), 331-351 (LVAS…LLLI), and 358-378 (FGIP…IGVL).

It belongs to the dicarboxylate/amino acid:cation symporter (DAACS) (TC 2.A.23) family.

The protein resides in the cell inner membrane. The enzyme catalyses L-serine(in) + Na(+)(in) = L-serine(out) + Na(+)(out). It catalyses the reaction L-threonine(in) + Na(+)(in) = L-threonine(out) + Na(+)(out). Involved in the import of serine and threonine into the cell, with the concomitant import of sodium (symport system). This is Serine/threonine transporter SstT from Erwinia tasmaniensis (strain DSM 17950 / CFBP 7177 / CIP 109463 / NCPPB 4357 / Et1/99).